Reading from the N-terminus, the 199-residue chain is MSKQNKKDWKKFRDEHKEEHKVENEILEEETDEESQHQEPALGHPSYTALEEQLTLAEQKAHENWEKSVRALAELENVRRRMEREVANAHKYGVEKLISALLPVVDSLEQALQLADKNSDPSMHEGLELTMKLFLDALQKFDVEQIDPLGQTFDPQQHEAMSMQPAPGAPPNSVITVFQKGYKLSDRVIRPARVIVSTK.

The span at 1 to 24 (MSKQNKKDWKKFRDEHKEEHKVEN) shows a compositional bias: basic and acidic residues. The segment at 1–52 (MSKQNKKDWKKFRDEHKEEHKVENEILEEETDEESQHQEPALGHPSYTALEE) is disordered.

It belongs to the GrpE family. Homodimer.

The protein localises to the cytoplasm. Its function is as follows. Participates actively in the response to hyperosmotic and heat shock by preventing the aggregation of stress-denatured proteins, in association with DnaK and GrpE. It is the nucleotide exchange factor for DnaK and may function as a thermosensor. Unfolded proteins bind initially to DnaJ; upon interaction with the DnaJ-bound protein, DnaK hydrolyzes its bound ATP, resulting in the formation of a stable complex. GrpE releases ADP from DnaK; ATP binding to DnaK triggers the release of the substrate protein, thus completing the reaction cycle. Several rounds of ATP-dependent interactions between DnaJ, DnaK and GrpE are required for fully efficient folding. This chain is Protein GrpE, found in Legionella pneumophila (strain Lens).